The chain runs to 552 residues: Non-structural protein NS1 (552 aa).

The protein belongs to the orbivirus non-structural protein NS1 family.

The polypeptide is Non-structural protein NS1 (Segment-5) (Antilocapra americana (Pronghorn)).